The following is a 145-amino-acid chain: Putative nickel-responsive regulator (145 aa).

Residues histidine 77, histidine 88, histidine 90, and cysteine 96 each contribute to the Ni(2+) site.

The protein belongs to the transcriptional regulatory CopG/NikR family. The cofactor is Ni(2+).

Transcriptional regulator. This chain is Putative nickel-responsive regulator, found in Rhizobium rhizogenes (strain K84 / ATCC BAA-868) (Agrobacterium radiobacter).